The chain runs to 313 residues: Biotin synthase (313 aa).

In terms of domain architecture, Radical SAM core spans Arg38–Ser262. Residues Cys53, Cys57, and Cys60 each coordinate [4Fe-4S] cluster. Residues Cys97, Cys128, Cys188, and Arg260 each contribute to the [2Fe-2S] cluster site.

The protein belongs to the radical SAM superfamily. Biotin synthase family. Homodimer. Requires [4Fe-4S] cluster as cofactor. The cofactor is [2Fe-2S] cluster.

It carries out the reaction (4R,5S)-dethiobiotin + (sulfur carrier)-SH + 2 reduced [2Fe-2S]-[ferredoxin] + 2 S-adenosyl-L-methionine = (sulfur carrier)-H + biotin + 2 5'-deoxyadenosine + 2 L-methionine + 2 oxidized [2Fe-2S]-[ferredoxin]. It participates in cofactor biosynthesis; biotin biosynthesis; biotin from 7,8-diaminononanoate: step 2/2. Catalyzes the conversion of dethiobiotin (DTB) to biotin by the insertion of a sulfur atom into dethiobiotin via a radical-based mechanism. The chain is Biotin synthase from Granulibacter bethesdensis (strain ATCC BAA-1260 / CGDNIH1).